The sequence spans 255 residues: Putative enoyl-CoA hydratase/isomerase YhaR (255 aa).

The next 2 helical transmembrane spans lie at 96 to 116 (VTIA…ALCA) and 126 to 146 (VLAM…HYLL).

It belongs to the enoyl-CoA hydratase/isomerase family.

It is found in the cell membrane. This chain is Putative enoyl-CoA hydratase/isomerase YhaR (yhaR), found in Bacillus subtilis (strain 168).